The chain runs to 364 residues: BOLA class I histocompatibility antigen, alpha chain BL3-7 (364 aa).

The first 27 residues, 1–27, serve as a signal peptide directing secretion; it reads MRVMRVMRPRTLLLLLSGVLVLTETLA. Residues 28–117 are alpha-1; that stretch reads GSHSLRYFYT…LRGYYNQSET (90 aa). The Extracellular portion of the chain corresponds to 28–310; sequence GSHSLRYFYT…WEPPQTSFLI (283 aa). N-linked (GlcNAc...) asparagine glycosylation is present at N113. The tract at residues 118-209 is alpha-2; sequence GSHNIQAMYG…ENGKDTLLRA (92 aa). Cystine bridges form between C128-C191 and C230-C286. Residues 210-301 are alpha-3; it reads DPPKAHVTHH…GLQEPLTLRW (92 aa). One can recognise an Ig-like C1-type domain in the interval 212-298; that stretch reads PKAHVTHHSI…QHEGLQEPLT (87 aa). Positions 302 to 310 are connecting peptide; it reads EPPQTSFLI. Residues 311-331 traverse the membrane as a helical segment; that stretch reads MGIIVGLVLLVVALVAGAVIW. Topologically, residues 332 to 364 are cytoplasmic; sequence RKKRSGEKGRIYTQAASSDSAQGSDVSLTVPKV. A phosphoserine mark is found at S355 and S358.

Belongs to the MHC class I family. Heterodimer of an alpha chain and a beta chain (beta-2-microglobulin).

The protein localises to the membrane. Its function is as follows. Involved in the presentation of foreign antigens to the immune system. The sequence is that of BOLA class I histocompatibility antigen, alpha chain BL3-7 from Bos taurus (Bovine).